Consider the following 257-residue polypeptide: Zinc transporter ZupT (257 aa).

The next 8 helical transmembrane spans lie at 5–25, 32–52, 61–81, 109–129, 137–157, 171–191, 195–215, and 236–256; these read LILTLLAGAATFIGAFLGVLG, VLAFSLGFAAGIMLLISLMEM, GMSPVLGYGMFIIGLLGYFGL, AILLTLGISLHNFPEGIATFV, LGFGIALAVALHNIPEGLAVA, IFWAGISGMAEILGGVLAWLI, LVSPIVMAAIMAAVAGIMVAL, and GVLCGMSIMGLSLVILQTIGI. The Fe(2+) site is built by N120 and E123. Residues E123 and H148 each contribute to the Zn(2+) site. 3 residues coordinate Fe(2+): N149, E152, and E181. Position 152 (E152) interacts with Zn(2+).

Belongs to the ZIP transporter (TC 2.A.5) family. ZupT subfamily.

It is found in the cell inner membrane. The enzyme catalyses Zn(2+)(in) = Zn(2+)(out). In terms of biological role, mediates zinc uptake. May also transport other divalent cations. The protein is Zinc transporter ZupT of Salmonella agona (strain SL483).